The following is a 318-amino-acid chain: NADH-ubiquinone oxidoreductase chain 1 (318 aa).

Helical transmembrane passes span 2–22, 70–90, 100–120, 136–156, 171–191, 231–251, 253–273, and 294–314; these read FLMN…FLTL, MFIL…IPMP, LGVL…LWSG, VAQT…IMML, HLWL…STLA, IIMM…NPLF, ELFT…FLWV, and LPLT…LAGI.

It belongs to the complex I subunit 1 family.

The protein localises to the mitochondrion inner membrane. The enzyme catalyses a ubiquinone + NADH + 5 H(+)(in) = a ubiquinol + NAD(+) + 4 H(+)(out). Functionally, core subunit of the mitochondrial membrane respiratory chain NADH dehydrogenase (Complex I) that is believed to belong to the minimal assembly required for catalysis. Complex I functions in the transfer of electrons from NADH to the respiratory chain. The immediate electron acceptor for the enzyme is believed to be ubiquinone. This is NADH-ubiquinone oxidoreductase chain 1 (MT-ND1) from Priodontes maximus (Giant armadillo).